The primary structure comprises 647 residues: CRE-binding bZIP protein SKO1 (647 aa).

Disordered regions lie at residues 1–119, 135–204, 305–331, and 353–429; these read MSSE…GSKR, STTN…QMPG, TPTT…TSTK, and KENE…EEQE. Polar residues predominate over residues 51–85; sequence RNNSTSTITQHSQRSTHSLNSIPEENGNSTVTDNS. Serine 94 bears the Phosphoserine mark. At threonine 113 the chain carries Phosphothreonine. Low complexity-rich tracts occupy residues 138 to 194 and 305 to 329; these read NPSQ…SGNG and TPTT…PNTS. 2 stretches are compositionally biased toward polar residues: residues 357-368 and 396-405; these read NLTTQIENNDQF and RKNSAVTTAP. At serine 399 the chain carries Phosphoserine. The bZIP domain occupies 429–492; the sequence is ERKRKEFLER…PSSSSNSQFN (64 aa). The segment at 430–451 is basic motif; sequence RKRKEFLERNRVAASKFRKRKK. A leucine-zipper region spans residues 454 to 461; sequence IKKIENDL. Phosphoserine is present on serine 558.

Belongs to the bZIP family.

It is found in the nucleus. Its function is as follows. Binds to the CRE motif 5'-TGACGTCA-3' and acts as a repressor of transcription of the SUC2 gene and most probably other genes. In Saccharomyces cerevisiae (strain ATCC 204508 / S288c) (Baker's yeast), this protein is CRE-binding bZIP protein SKO1 (SKO1).